Reading from the N-terminus, the 894-residue chain is Microsomal triglyceride transfer protein large subunit (894 aa).

A signal peptide spans 1–18 (MILLAVLFLCFISSYSAS). The 632-residue stretch at 28–659 (LNNDRLYKLT…IFQYIGKAGL (632 aa)) folds into the Vitellogenin domain. C174 and C194 are disulfide-bonded.

Heterodimer; heterodimerizes with the protein disulfide isomerase (P4HB/PDI). Interacts with APOB. Interacts with PRAP1. Liver and small intestine. Also found in ovary, testis and kidney.

It is found in the endoplasmic reticulum. Its subcellular location is the golgi apparatus. The catalysed reaction is a 1,2-diacyl-sn-glycero-3-phosphocholine(in) = a 1,2-diacyl-sn-glycero-3-phosphocholine(out). It carries out the reaction a 1,2-diacyl-sn-glycero-3-phosphoethanolamine(in) = a 1,2-diacyl-sn-glycero-3-phosphoethanolamine(out). The enzyme catalyses a cholesterol ester(in) = a cholesterol ester(out). It catalyses the reaction a triacyl-sn-glycerol(in) = a triacyl-sn-glycerol(out). Catalyzes the transport of triglyceride, cholesteryl ester, and phospholipid between phospholipid surfaces. Required for the assembly and secretion of plasma lipoproteins that contain apolipoprotein B. May be involved in regulating cholesteryl ester biosynthesis in cells that produce lipoproteins. In Homo sapiens (Human), this protein is Microsomal triglyceride transfer protein large subunit (MTTP).